Here is a 673-residue protein sequence, read N- to C-terminus: UvrABC system protein B (673 aa).

One can recognise a Helicase ATP-binding domain in the interval 26-415 (EGLEDGLAHQ…GDVVDQVVRP (390 aa)). Residue 39–46 (GVTGSGKT) coordinates ATP. Residues 92-115 (YYDYYQPEAYVPSSDTFIEKDASV) carry the Beta-hairpin motif. The Helicase C-terminal domain maps to 431 to 597 (QVDDLLSEIR…GLNKKVVDIL (167 aa)). Residues 608-627 (AKGRGKSRPIVEPDNVPMDM) are disordered. Positions 633-668 (QQKIHELEGLMMQHAQNLEFEEAAQIRDQLHQLREL) constitute a UVR domain.

It belongs to the UvrB family. Forms a heterotetramer with UvrA during the search for lesions. Interacts with UvrC in an incision complex.

Its subcellular location is the cytoplasm. In terms of biological role, the UvrABC repair system catalyzes the recognition and processing of DNA lesions. A damage recognition complex composed of 2 UvrA and 2 UvrB subunits scans DNA for abnormalities. Upon binding of the UvrA(2)B(2) complex to a putative damaged site, the DNA wraps around one UvrB monomer. DNA wrap is dependent on ATP binding by UvrB and probably causes local melting of the DNA helix, facilitating insertion of UvrB beta-hairpin between the DNA strands. Then UvrB probes one DNA strand for the presence of a lesion. If a lesion is found the UvrA subunits dissociate and the UvrB-DNA preincision complex is formed. This complex is subsequently bound by UvrC and the second UvrB is released. If no lesion is found, the DNA wraps around the other UvrB subunit that will check the other stand for damage. In Escherichia coli O6:H1 (strain CFT073 / ATCC 700928 / UPEC), this protein is UvrABC system protein B.